The sequence spans 292 residues: S-methyl-5'-thioadenosine phosphorylase (292 aa).

Phosphate-binding positions include Ser11, 53–54, and 86–87; these read RH and SA. Met184 contributes to the substrate binding site. Residue Thr185 participates in phosphate binding. Residue 208 to 210 participates in substrate binding; sequence DYD.

It belongs to the PNP/MTAP phosphorylase family. MTAP subfamily. In terms of assembly, homohexamer. Dimer of a homotrimer.

The enzyme catalyses S-methyl-5'-thioadenosine + phosphate = 5-(methylsulfanyl)-alpha-D-ribose 1-phosphate + adenine. The protein operates within amino-acid biosynthesis; L-methionine biosynthesis via salvage pathway; S-methyl-5-thio-alpha-D-ribose 1-phosphate from S-methyl-5'-thioadenosine (phosphorylase route): step 1/1. Catalyzes the reversible phosphorylation of S-methyl-5'-thioadenosine (MTA) to adenine and 5-methylthioribose-1-phosphate. Involved in the breakdown of MTA, a major by-product of polyamine biosynthesis. Responsible for the first step in the methionine salvage pathway after MTA has been generated from S-adenosylmethionine. Has broad substrate specificity with 6-aminopurine nucleosides as preferred substrates. This Koribacter versatilis (strain Ellin345) protein is S-methyl-5'-thioadenosine phosphorylase.